Reading from the N-terminus, the 362-residue chain is Meiotic recombination protein SPO11-1 (362 aa).

Residues 8–142 (SESTNLLQRI…LNVVSVGNGL (135 aa)) form the Topo IIA-type catalytic domain. The active-site O-(5'-phospho-DNA)-tyrosine intermediate is Tyr103. Mg(2+)-binding residues include Glu189 and Asp241.

Belongs to the TOP6A family. In terms of assembly, heterotetramer of 2 SPO11 (SPO11-1 and/or SPO11-2) and 2 MTOPVIB chains. Interacts with MTOPVIB. May form a heterodimer with SPO11-2. Interacts with PRD1. Does not interact with TOP6B. The cofactor is Mg(2+). In terms of tissue distribution, expressed in shoots, young seedlings, flowers and reproductive tissues. Not found in roots or rosette leaves.

Its subcellular location is the nucleus. It carries out the reaction ATP-dependent breakage, passage and rejoining of double-stranded DNA.. Its function is as follows. Component of a topoisomerase 6 complex specifically required for meiotic recombination. Together with MTOPVIB, mediates DNA cleavage that forms the double-strand breaks (DSB) that initiate meiotic recombination. The complex promotes relaxation of negative and positive supercoiled DNA and DNA decatenation through cleavage and ligation cycles. This is Meiotic recombination protein SPO11-1 from Arabidopsis thaliana (Mouse-ear cress).